The sequence spans 142 residues: Matrix protein (142 aa).

Homooligomer. Forms homotetramers. Interacts with phosphoprotein P. Binds to ssRNA.

It is found in the virion. It localises to the host cytoplasm. Its subcellular location is the host cell membrane. The protein resides in the host nucleus. Functionally, plays a crucial role in virion assembly and budding. This chain is Matrix protein (M), found in Borna disease virus (strain V) (BDV).